The sequence spans 105 residues: Small ribosomal subunit protein uS10 (105 aa).

The protein belongs to the universal ribosomal protein uS10 family. As to quaternary structure, part of the 30S ribosomal subunit.

Functionally, involved in the binding of tRNA to the ribosomes. The protein is Small ribosomal subunit protein uS10 of Cyanothece sp. (strain PCC 7425 / ATCC 29141).